Consider the following 91-residue polypeptide: Small ribosomal subunit protein uS19 (91 aa).

It belongs to the universal ribosomal protein uS19 family.

In terms of biological role, protein S19 forms a complex with S13 that binds strongly to the 16S ribosomal RNA. This chain is Small ribosomal subunit protein uS19, found in Paraburkholderia phymatum (strain DSM 17167 / CIP 108236 / LMG 21445 / STM815) (Burkholderia phymatum).